A 458-amino-acid chain; its full sequence is uncharacterized protein (458 aa).

Basic and acidic residues predominate over residues 1 to 10; sequence MQAEPKKSQA. The interval 1 to 20 is disordered; it reads MQAEPKKSQAEQRAVAEPVS. In terms of domain architecture, TRAM spans 23–84; that stretch reads VSLVGEEYEV…ARFLRADAVE (62 aa). Residues C97, C105, C108, and C193 each contribute to the [4Fe-4S] cluster site. Positions 287, 316, 340, and 384 each coordinate S-adenosyl-L-methionine. C411 functions as the Nucleophile in the catalytic mechanism.

Belongs to the class I-like SAM-binding methyltransferase superfamily. RNA M5U methyltransferase family.

This is an uncharacterized protein from Streptomyces coelicolor (strain ATCC BAA-471 / A3(2) / M145).